A 1856-amino-acid chain; its full sequence is Autophagy-related protein 2 (1856 aa).

7 disordered regions span residues 123–167 (NTND…TGNK), 229–283 (LRTL…GNES), 309–328 (KSAASGIPGEVDNKATDKED), 395–428 (TKSRSAQRNEKFPQYTNDNDEIPEDQSESDDASH), 1157–1177 (LNGTENGSTSESSSQEASSLM), 1614–1647 (MLGGEGSSVRSPNLGGSDNRRNSNASDELPVEVA), and 1719–1741 (KLQPHTKGNHEGLTEEEEDEDED). The span at 137-147 (ASEDDDEDDID) shows a compositional bias: acidic residues. Residues 250 to 262 (KKQQGSDNDSPTD) are compositionally biased toward polar residues. Residues 270–280 (NDNDDDDDDYG) are compositionally biased toward acidic residues. Positions 412 to 424 (DNDEIPEDQSESD) are enriched in acidic residues. The span at 1157–1170 (LNGTENGSTSESSS) shows a compositional bias: low complexity. The span at 1621-1639 (SVRSPNLGGSDNRRNSNAS) shows a compositional bias: polar residues. Acidic residues predominate over residues 1732–1741 (TEEEEDEDED).

Belongs to the ATG2 family.

It is found in the preautophagosomal structure membrane. The protein resides in the endoplasmic reticulum membrane. It catalyses the reaction a 1,2-diacyl-sn-glycero-3-phosphocholine(in) = a 1,2-diacyl-sn-glycero-3-phosphocholine(out). The catalysed reaction is a 1,2-diacyl-sn-glycero-3-phospho-L-serine(in) = a 1,2-diacyl-sn-glycero-3-phospho-L-serine(out). The enzyme catalyses a 1,2-diacyl-sn-glycero-3-phosphoethanolamine(in) = a 1,2-diacyl-sn-glycero-3-phosphoethanolamine(out). In terms of biological role, lipid transfer protein required for autophagosome completion and peroxisome degradation. Tethers the edge of the isolation membrane (IM) to the endoplasmic reticulum (ER) and mediates direct lipid transfer from ER to IM for IM expansion. ATG2/SPO72 binds to the ER exit site (ERES), which is the membrane source for autophagosome formation, using basic residues in its N-terminal region (NR) and to the expanding edge of the IM through its C-terminal region. The latter binding is assisted by an ATG18-PtdIns3P interaction. ATG2/SPO72 then extracts phospholipids from the membrane source using its NR and transfers them to ATG9 to the IM through its predicted beta-sheet-rich structure for membrane expansion. The chain is Autophagy-related protein 2 (SPO72) from Candida albicans (strain SC5314 / ATCC MYA-2876) (Yeast).